Consider the following 646-residue polypeptide: MKKETIFSEVETANSKQLAVLKANFPQCFDKNGAFIQEKLLEIIRASEVELSKESYSLNWLGKSYARLLANLPPKTLLAEDKTHNQQEENKNSQNLLIKGDNLEVLKHMVNAYAEKVNMIYIDPPYNTGKDGFVYNDDRKFTPEQLSELAGIELDEANRILEFTTKGSSSHSAWLTFIYPRLYIARELLKEDGVIFISIDDNEDKQLGLLCDEVFGQGNFVAKLPTIMNLKGNHDNFGFSDTHEYIYVYAKNKDVCSLGQFDIDESEVEKEWDEDEYGLFKRADTLKRTGQDASRKSRPKGWFPVFINSENKVYVTDDDKPLNEDDYVLYPVSPTGEELSWSWGKKKINDEFYNLIVIDIKDGKNIYKKQRPALGELPTKKPKSIWYKPEYSTSTATTELKNLLGAKLFEGPKPVPLITDLVKIGTKKDSLVLDFFAGSGTTAEAVAYLNEKDSGCRNFICIQKDEVINKTKNAYSLGYRSIFEITKKRIQEVFKKSTTTSDNAAKIGFKVIHTIDDFRAKVESELTLTNHTFFDDAVLTPEQYDALLTTWCVYDGSLLTTPIEDVDLSGYTAHFCNGRLYLIAPNFTSEALKALLQKLDSDEDFAPNKVVFYGCNFESAKQRELNEALKSYANKKSIELDLVVRN.

The tract at residues Asp123–Tyr126 is binding of S-adenosyl methionine.

Belongs to the N(4)/N(6)-methyltransferase family. Homodimer. A heterotetramer with stoichiometry Res(2)Mod(2).

It catalyses the reaction a 2'-deoxyadenosine in DNA + S-adenosyl-L-methionine = an N(6)-methyl-2'-deoxyadenosine in DNA + S-adenosyl-L-homocysteine + H(+). Functionally, a beta subtype methylase that binds the system-specific DNA recognition site 5'-AGACC-3' and methylates A-3 (of only 1 strand as the other does not have an A residue). DNA restriction requires both the Res and Mod subunits. This chain is Type III restriction-modification enzyme EcoPI Mod subunit, found in Enterobacteriaceae (Bacteriophage P1).